The chain runs to 206 residues: Ribosomal RNA small subunit methyltransferase G (206 aa).

S-adenosyl-L-methionine-binding positions include glycine 71, phenylalanine 76, isoleucine 125–glutamate 126, and arginine 139.

Belongs to the methyltransferase superfamily. RNA methyltransferase RsmG family.

It localises to the cytoplasm. It catalyses the reaction guanosine(527) in 16S rRNA + S-adenosyl-L-methionine = N(7)-methylguanosine(527) in 16S rRNA + S-adenosyl-L-homocysteine. Functionally, specifically methylates the N7 position of guanine in position 527 of 16S rRNA. This chain is Ribosomal RNA small subunit methyltransferase G, found in Cereibacter sphaeroides (strain ATCC 17023 / DSM 158 / JCM 6121 / CCUG 31486 / LMG 2827 / NBRC 12203 / NCIMB 8253 / ATH 2.4.1.) (Rhodobacter sphaeroides).